Here is a 279-residue protein sequence, read N- to C-terminus: uncharacterized protein (279 aa).

The signal sequence occupies residues 1-21; that stretch reads MKIIRTLFLLLIAVYGSSVVA.

The protein to E.coli YfcO.

This is an uncharacterized protein from Salmonella typhimurium (strain LT2 / SGSC1412 / ATCC 700720).